We begin with the raw amino-acid sequence, 198 residues long: Recombination protein RecR (198 aa).

The C4-type zinc-finger motif lies at 57-72 (CSICGNLTDDDPCHIC). In terms of domain architecture, Toprim spans 80-175 (TTILVVEDAK…KVTRLARGLA (96 aa)).

Belongs to the RecR family.

Its function is as follows. May play a role in DNA repair. It seems to be involved in an RecBC-independent recombinational process of DNA repair. It may act with RecF and RecO. This is Recombination protein RecR from Streptococcus pyogenes serotype M1.